Here is a 430-residue protein sequence, read N- to C-terminus: Glucose-1-phosphate adenylyltransferase (430 aa).

Alpha-D-glucose 1-phosphate is bound by residues Gly163, 178–179 (EK), and Ser210.

Belongs to the bacterial/plant glucose-1-phosphate adenylyltransferase family. As to quaternary structure, homotetramer.

The enzyme catalyses alpha-D-glucose 1-phosphate + ATP + H(+) = ADP-alpha-D-glucose + diphosphate. The protein operates within glycan biosynthesis; glycogen biosynthesis. Functionally, involved in the biosynthesis of ADP-glucose, a building block required for the elongation reactions to produce glycogen. Catalyzes the reaction between ATP and alpha-D-glucose 1-phosphate (G1P) to produce pyrophosphate and ADP-Glc. In Synechococcus elongatus (strain ATCC 33912 / PCC 7942 / FACHB-805) (Anacystis nidulans R2), this protein is Glucose-1-phosphate adenylyltransferase.